Reading from the N-terminus, the 462-residue chain is Bifunctional enzyme LpxC/FabZ (462 aa).

The UDP-3-O-acyl-N-acetylglucosamine deacetylase stretch occupies residues 1-302; sequence MQKQQTLKDK…MARLIRKEIK (302 aa). Positions 78, 260, and 264 each coordinate Zn(2+). Residue His-287 is the Proton donor of the active site. Residues 303–462 are 3-hydroxyacyl-[acyl-carrier-protein] dehydratase; the sequence is QNEAQAPVYN…FMAQIIQNKE (160 aa). His-364 is an active-site residue.

In the N-terminal section; belongs to the LpxC family. It in the C-terminal section; belongs to the thioester dehydratase family. It depends on Zn(2+) as a cofactor.

The protein resides in the cytoplasm. The catalysed reaction is a UDP-3-O-[(3R)-3-hydroxyacyl]-N-acetyl-alpha-D-glucosamine + H2O = a UDP-3-O-[(3R)-3-hydroxyacyl]-alpha-D-glucosamine + acetate. It carries out the reaction a (3R)-hydroxyacyl-[ACP] = a (2E)-enoyl-[ACP] + H2O. It functions in the pathway glycolipid biosynthesis; lipid IV(A) biosynthesis; lipid IV(A) from (3R)-3-hydroxytetradecanoyl-[acyl-carrier-protein] and UDP-N-acetyl-alpha-D-glucosamine: step 2/6. In terms of biological role, catalyzes the hydrolysis of UDP-3-O-myristoyl-N-acetylglucosamine to form UDP-3-O-myristoylglucosamine and acetate, the committed step in lipid A biosynthesis. Its function is as follows. Involved in unsaturated fatty acids biosynthesis. Catalyzes the dehydration of short chain beta-hydroxyacyl-ACPs and long chain saturated and unsaturated beta-hydroxyacyl-ACPs. In Porphyromonas gingivalis (strain ATCC BAA-308 / W83), this protein is Bifunctional enzyme LpxC/FabZ (lpxC/fabZ).